Reading from the N-terminus, the 200-residue chain is Holliday junction branch migration complex subunit RuvA (200 aa).

A domain I region spans residues 1–64; that stretch reads MFAYFKGSLV…EDALQLYGFF (64 aa). The tract at residues 65–143 is domain II; it reads KEEERQLFRL…KLPLVTPAAG (79 aa). The segment at 143–147 is flexible linker; sequence GKAAM. Residues 148–200 form a domain III region; the sequence is PSHHVKDDAVHALVTLGFSRLLAQKAVSALLEEKPEQSVEEVIKYALATIHNS.

Belongs to the RuvA family. As to quaternary structure, homotetramer. Forms an RuvA(8)-RuvB(12)-Holliday junction (HJ) complex. HJ DNA is sandwiched between 2 RuvA tetramers; dsDNA enters through RuvA and exits via RuvB. An RuvB hexamer assembles on each DNA strand where it exits the tetramer. Each RuvB hexamer is contacted by two RuvA subunits (via domain III) on 2 adjacent RuvB subunits; this complex drives branch migration. In the full resolvosome a probable DNA-RuvA(4)-RuvB(12)-RuvC(2) complex forms which resolves the HJ.

It localises to the cytoplasm. Its function is as follows. The RuvA-RuvB-RuvC complex processes Holliday junction (HJ) DNA during genetic recombination and DNA repair, while the RuvA-RuvB complex plays an important role in the rescue of blocked DNA replication forks via replication fork reversal (RFR). RuvA specifically binds to HJ cruciform DNA, conferring on it an open structure. The RuvB hexamer acts as an ATP-dependent pump, pulling dsDNA into and through the RuvAB complex. HJ branch migration allows RuvC to scan DNA until it finds its consensus sequence, where it cleaves and resolves the cruciform DNA. The protein is Holliday junction branch migration complex subunit RuvA of Chlorobium phaeobacteroides (strain DSM 266 / SMG 266 / 2430).